Reading from the N-terminus, the 93-residue chain is DNA/RNA-binding protein Alba (93 aa).

At Lys11 the chain carries N6-acetyllysine.

It belongs to the histone-like Alba family. Post-translationally, acetylated. Acetylation at Lys-11 decreases DNA-binding affinity.

It is found in the cytoplasm. The protein resides in the chromosome. Binds double-stranded DNA tightly but without sequence specificity. Involved in DNA compaction. This Pyrococcus furiosus (strain ATCC 43587 / DSM 3638 / JCM 8422 / Vc1) protein is DNA/RNA-binding protein Alba.